A 320-amino-acid polypeptide reads, in one-letter code: Heterogeneous nuclear ribonucleoprotein A1 (320 aa).

The residue at position 1 (methionine 1) is an N-acetylmethionine. Serine 2 bears the N-acetylserine; in Heterogeneous nuclear ribonucleoprotein A1, N-terminally processed mark. A Phosphoserine modification is found at serine 2. N6-acetyllysine; alternate is present on lysine 3. A Glycyl lysine isopeptide (Lys-Gly) (interchain with G-Cter in SUMO2); alternate cross-link involves residue lysine 3. 2 positions are modified to phosphoserine: serine 4 and serine 6. A globular A domain region spans residues 4–94 (SESPKEPEQL…EPKRAVSRED (91 aa)). Lysine 8 is covalently cross-linked (Glycyl lysine isopeptide (Lys-Gly) (interchain with G-Cter in SUMO2)). 2 RRM domains span residues 14–97 (RKLF…DSQR) and 105–184 (KKIF…LSKQ). Phosphoserine is present on serine 22. Lysine 78 is covalently cross-linked (Glycyl lysine isopeptide (Lys-Gly) (interchain with G-Cter in SUMO2)). Positions 95-185 (SQRPGAHLTV…EVRKALSKQE (91 aa)) are globular B domain. A Glycyl lysine isopeptide (Lys-Gly) (interchain with G-Cter in SUMO) cross-link involves residue lysine 113. Glycyl lysine isopeptide (Lys-Gly) (interchain with G-Cter in SUMO2) cross-links involve residues lysine 179 and lysine 183. A disordered region spans residues 182–216 (SKQEMASASSSQRGRSGSGNFGGGRGGGFGGNDNF). Position 192 is a phosphoserine; by MKNK2 (serine 192). Residue arginine 194 is modified to Asymmetric dimethylarginine; alternate. Arginine 194 is subject to Dimethylated arginine; alternate. Position 194 is an omega-N-methylarginine; alternate (arginine 194). Residues 197–216 (SGSGNFGGGRGGGFGGNDNF) are compositionally biased toward gly residues. Serine 199 is modified (phosphoserine). 4 positions are modified to asymmetric dimethylarginine; alternate: arginine 206, arginine 218, arginine 225, and arginine 232. The residue at position 206 (arginine 206) is a Dimethylated arginine; alternate. Omega-N-methylarginine; alternate occurs at positions 206, 218, 225, and 232. An RNA-binding RGG-box region spans residues 218–240 (RGGNFSGRGGFGGSRGGGGYGGS). Arginine 225 is subject to Dimethylated arginine; alternate. Positions 268-305 (NQSSNFGPMKGGNFGGRSLGPYGGGGQYFAKPRNQGGY) are nuclear targeting sequence. A compositionally biased stretch (gly residues) spans 277 to 294 (KGGNFGGRSLGPYGGGGQ). The tract at residues 277–320 (KGGNFGGRSLGPYGGGGQYFAKPRNQGGYGGSSSSSSYGSGRRF) is disordered. Arginine 284 carries the post-translational modification Omega-N-methylarginine. Serine 285 is subject to Phosphoserine. Position 298 is an N6-acetyllysine; alternate (lysine 298). Lysine 298 is covalently cross-linked (Glycyl lysine isopeptide (Lys-Gly) (interchain with G-Cter in SUMO2); alternate). Arginine 300 is subject to Omega-N-methylarginine. Positions 308-320 (SSSSSSYGSGRRF) are enriched in low complexity. Serine 309 is modified (phosphoserine). Residues serine 310, serine 311, and serine 312 each carry the phosphoserine; by MKNK2 modification. Phosphoserine occurs at positions 313 and 316. Omega-N-methylarginine is present on arginine 318.

As to quaternary structure, identified in the spliceosome C complex. Identified in a IGF2BP1-dependent mRNP granule complex containing untranslated mRNAs. Interacts with SEPT6, C9orf72, KHDRBS1, UBQLN2. Interacts with PPIA/CYPA. Sumoylated.

The protein resides in the nucleus. Its subcellular location is the cytoplasm. Its function is as follows. Involved in the packaging of pre-mRNA into hnRNP particles, transport of poly(A) mRNA from the nucleus to the cytoplasm and modulation of splice site selection. Plays a role in the splicing of pyruvate kinase PKM by binding repressively to sequences flanking PKM exon 9, inhibiting exon 9 inclusion and resulting in exon 10 inclusion and production of the PKM M2 isoform. Binds to the IRES and thereby inhibits the translation of the apoptosis protease activating factor APAF1. May bind to specific miRNA hairpins. In Macaca mulatta (Rhesus macaque), this protein is Heterogeneous nuclear ribonucleoprotein A1 (HNRNPA1).